We begin with the raw amino-acid sequence, 296 residues long: Nucleotide-binding protein SZO_12220 (296 aa).

Position 13–20 (13–20 (GMSGAGKT)) interacts with ATP. 63–66 (DMRS) contributes to the GTP binding site.

It belongs to the RapZ-like family.

In terms of biological role, displays ATPase and GTPase activities. This Streptococcus equi subsp. zooepidemicus (strain H70) protein is Nucleotide-binding protein SZO_12220.